Here is a 55-residue protein sequence, read N- to C-terminus: Large ribosomal subunit protein bL33A (55 aa).

It belongs to the bacterial ribosomal protein bL33 family.

The protein is Large ribosomal subunit protein bL33A of Salinispora tropica (strain ATCC BAA-916 / DSM 44818 / JCM 13857 / NBRC 105044 / CNB-440).